A 712-amino-acid polypeptide reads, in one-letter code: Probable GTP diphosphokinase RSH3, chloroplastic (712 aa).

A chloroplast-targeting transit peptide spans 1-64 (MVVATTIALY…LLFSGASVKS (64 aa)). A compositionally biased stretch (low complexity) spans 65 to 74 (SSSSSSSHPS). A disordered region spans residues 65 to 84 (SSSSSSSHPSVGEELASIRH). The 102-residue stretch at 237 to 338 (YLQHCVETAM…IKLADRLHNM (102 aa)) folds into the HD domain.

Belongs to the RelA/SpoT family.

It is found in the plastid. Its subcellular location is the chloroplast. The catalysed reaction is GTP + ATP = guanosine 3'-diphosphate 5'-triphosphate + AMP. Functionally, probable ppGpp (guanosine 3'-diphosphate 5'-diphosphate) synthetase that may be involved in a rapid plant ppGpp-mediated response to pathogens and other stresses. The sequence is that of Probable GTP diphosphokinase RSH3, chloroplastic (RSH3) from Arabidopsis thaliana (Mouse-ear cress).